An 83-amino-acid polypeptide reads, in one-letter code: MADAAPADVKKLSFERAMEELETIVKRLEDGKVPLEESVAIYERGEALKRRCDELLRQAEARVDKITTDAQGKPVGTEPLDVQ.

This sequence belongs to the XseB family. As to quaternary structure, heterooligomer composed of large and small subunits.

Its subcellular location is the cytoplasm. The catalysed reaction is Exonucleolytic cleavage in either 5'- to 3'- or 3'- to 5'-direction to yield nucleoside 5'-phosphates.. Its function is as follows. Bidirectionally degrades single-stranded DNA into large acid-insoluble oligonucleotides, which are then degraded further into small acid-soluble oligonucleotides. This chain is Exodeoxyribonuclease 7 small subunit, found in Rhodopseudomonas palustris (strain BisB5).